Here is a 384-residue protein sequence, read N- to C-terminus: Galactokinase (384 aa).

34 to 37 (EHTD) is a binding site for substrate. 123–129 (SSGLSSS) contacts ATP. Residues serine 129 and glutamate 161 each coordinate Mg(2+). The active-site Proton acceptor is aspartate 173. Tyrosine 222 is a substrate binding site.

The protein belongs to the GHMP kinase family. GalK subfamily.

The protein localises to the cytoplasm. It carries out the reaction alpha-D-galactose + ATP = alpha-D-galactose 1-phosphate + ADP + H(+). It participates in carbohydrate metabolism; galactose metabolism. Functionally, catalyzes the transfer of the gamma-phosphate of ATP to D-galactose to form alpha-D-galactose-1-phosphate (Gal-1-P). The chain is Galactokinase from Glaesserella parasuis serovar 5 (strain SH0165) (Haemophilus parasuis).